A 173-amino-acid polypeptide reads, in one-letter code: NADH-ubiquinone oxidoreductase chain 6 (173 aa).

5 helical membrane passes run 1-21 (MAYIMLTLLIGMVLGVISVAS), 25-45 (PYFAALGLVLVAGVGCVVLMG), 53-73 (LVLFLIYLGGMLVVFAYCAAL), 87-107 (VLGSVLGYLLLVVGAGSWFWG), and 139-159 (LGGGLLVVSAWVLLLTLLVVL).

The protein belongs to the complex I subunit 6 family.

The protein localises to the mitochondrion membrane. It carries out the reaction a ubiquinone + NADH + 5 H(+)(in) = a ubiquinol + NAD(+) + 4 H(+)(out). Functionally, core subunit of the mitochondrial membrane respiratory chain NADH dehydrogenase (Complex I) that is believed to belong to the minimal assembly required for catalysis. Complex I functions in the transfer of electrons from NADH to the respiratory chain. The immediate electron acceptor for the enzyme is believed to be ubiquinone. The sequence is that of NADH-ubiquinone oxidoreductase chain 6 (MT-ND6) from Gadus morhua (Atlantic cod).